Reading from the N-terminus, the 452-residue chain is Lichenan permease IIC component (452 aa).

One can recognise a PTS EIIC type-3 domain in the interval 8–421 (LEEKVMPIAG…AVSFVVYYPF (414 aa)). The next 10 membrane-spanning stretches (helical) occupy residues 31 to 51 (GIIL…IGNL), 72 to 92 (LAYP…FGIA), 104 to 124 (LSAG…QVPF), 138 to 158 (GIPL…IAMV), 187 to 207 (FVAL…RLIV), 218 to 238 (IVSV…GGSL), 246 to 266 (LLWA…APIW), 291 to 311 (FFDI…VVTM), 351 to 373 (LLLP…MSTG), and 402 to 422 (SGAV…YPFF).

It is found in the cell membrane. Functionally, the phosphoenolpyruvate-dependent sugar phosphotransferase system (PTS), a major carbohydrate active -transport system, catalyzes the phosphorylation of incoming sugar substrates concomitant with their translocation across the cell membrane. This system is involved in lichenan transport. This Bacillus subtilis (strain 168) protein is Lichenan permease IIC component (licC).